The following is a 394-amino-acid chain: 1-deoxy-D-xylulose 5-phosphate reductoisomerase (394 aa).

Positions 12, 13, 14, 15, 39, 40, and 126 each coordinate NADPH. Lys-127 contacts 1-deoxy-D-xylulose 5-phosphate. Position 128 (Glu-128) interacts with NADPH. Asp-152 serves as a coordination point for Mn(2+). 1-deoxy-D-xylulose 5-phosphate-binding residues include Ser-153, Glu-154, Ser-183, and His-206. Position 154 (Glu-154) interacts with Mn(2+). Residue Gly-212 participates in NADPH binding. Residues Ser-219, Asn-224, Lys-225, and Glu-228 each contribute to the 1-deoxy-D-xylulose 5-phosphate site. Glu-228 contributes to the Mn(2+) binding site.

This sequence belongs to the DXR family. The cofactor is Mg(2+). Mn(2+) serves as cofactor.

The enzyme catalyses 2-C-methyl-D-erythritol 4-phosphate + NADP(+) = 1-deoxy-D-xylulose 5-phosphate + NADPH + H(+). It functions in the pathway isoprenoid biosynthesis; isopentenyl diphosphate biosynthesis via DXP pathway; isopentenyl diphosphate from 1-deoxy-D-xylulose 5-phosphate: step 1/6. Catalyzes the NADPH-dependent rearrangement and reduction of 1-deoxy-D-xylulose-5-phosphate (DXP) to 2-C-methyl-D-erythritol 4-phosphate (MEP). The chain is 1-deoxy-D-xylulose 5-phosphate reductoisomerase from Neisseria gonorrhoeae (strain ATCC 700825 / FA 1090).